We begin with the raw amino-acid sequence, 517 residues long: Ammonium transporter 3 (517 aa).

The Extracellular portion of the chain corresponds to Met1–Asp32. The helical transmembrane segment at Ile33–Tyr53 threads the bilayer. Topologically, residues Tyr54–Gln69 are cytoplasmic. A helical membrane pass occupies residues Ser70–Cys90. The Extracellular segment spans residues Ser91–Thr118. A helical transmembrane segment spans residues Ile119–Phe139. Residues Ala140 to Arg148 are Cytoplasmic-facing. Residues Leu149–Tyr169 form a helical membrane-spanning segment. At Trp170 to Thr180 the chain is on the extracellular side. A helical transmembrane segment spans residues Leu181–Leu201. Residues Ala202–Met272 are Cytoplasmic-facing. A helical transmembrane segment spans residues Val273 to Leu293. Over Thr294–Thr299 the chain is Extracellular. A helical transmembrane segment spans residues Ala300–Ile320. Over Asp321–Lys327 the chain is Cytoplasmic. The helical transmembrane segment at Phe328–Cys348 threads the bilayer. A topological domain (extracellular) is located at residue Gly349. The helical transmembrane segment at Phe350–Leu370 threads the bilayer. Residues His371 to Arg384 lie on the Cytoplasmic side of the membrane. The chain crosses the membrane as a helical span at residues Val385–His405. Residues Pro406–Gln432 lie on the Extracellular side of the membrane. Residues Phe433 to Leu453 traverse the membrane as a helical segment. Residues Val454–Phe517 lie on the Cytoplasmic side of the membrane.

Belongs to the ammonia transporter channel (TC 1.A.11.2) family.

It localises to the membrane. Its function is as follows. Transporter for ammonium to use as a nitrogen source. This chain is Ammonium transporter 3 (amt3), found in Schizosaccharomyces pombe (strain 972 / ATCC 24843) (Fission yeast).